The primary structure comprises 382 residues: tRNA(Met) cytidine acetate ligase (382 aa).

Residues 9–22, G103, N152, and R177 contribute to the ATP site; that span reads VTEY…HAYQ.

It belongs to the TmcAL family.

Its subcellular location is the cytoplasm. It carries out the reaction cytidine(34) in elongator tRNA(Met) + acetate + ATP = N(4)-acetylcytidine(34) in elongator tRNA(Met) + AMP + diphosphate. Catalyzes the formation of N(4)-acetylcytidine (ac(4)C) at the wobble position of elongator tRNA(Met), using acetate and ATP as substrates. First activates an acetate ion to form acetyladenylate (Ac-AMP) and then transfers the acetyl group to tRNA to form ac(4)C34. This Levilactobacillus brevis (strain ATCC 367 / BCRC 12310 / CIP 105137 / JCM 1170 / LMG 11437 / NCIMB 947 / NCTC 947) (Lactobacillus brevis) protein is tRNA(Met) cytidine acetate ligase.